Consider the following 208-residue polypeptide: 3,4-dihydroxy-2-butanone 4-phosphate synthase (208 aa).

A Phosphothreonine modification is found at Thr3. Glu27 is a binding site for Mg(2+). Asp31 lines the D-ribulose 5-phosphate pocket. Cys56 bears the S-glutathionyl cysteine; by GRX2 mark. D-ribulose 5-phosphate contacts are provided by residues Thr88 and 145–149 (RRGHT). His148 serves as a coordination point for Mg(2+).

This sequence belongs to the DHBP synthase family. Homodimer. The cofactor is Mg(2+). Mn(2+) is required as a cofactor. Post-translationally, S-glutathionylation of Cys-56 is reversible and dependent on the cytoplasmic isoform of glutaredoxin-2.

It is found in the cytoplasm. It localises to the nucleus. The protein resides in the mitochondrion intermembrane space. The enzyme catalyses D-ribulose 5-phosphate = (2S)-2-hydroxy-3-oxobutyl phosphate + formate + H(+). Its pathway is cofactor biosynthesis; riboflavin biosynthesis; 2-hydroxy-3-oxobutyl phosphate from D-ribulose 5-phosphate: step 1/1. Functionally, catalyzes the conversion of D-ribulose 5-phosphate to formate and 3,4-dihydroxy-2-butanone 4-phosphate. Also has an unrelated function in expression of mitochondrial respiration. The sequence is that of 3,4-dihydroxy-2-butanone 4-phosphate synthase (RIB3) from Saccharomyces cerevisiae (strain ATCC 204508 / S288c) (Baker's yeast).